A 581-amino-acid polypeptide reads, in one-letter code: DNA primase (581 aa).

Residues 40–64 form a CHC2-type zinc finger; it reads CPFHNEKTPSFTVNGEKQFYHCFGC. Residues 259–341 form the Toprim domain; that stretch reads QRLLVVEGYM…GRQVRFMFLP (83 aa). Mg(2+) contacts are provided by E265, D309, and D311.

The protein belongs to the DnaG primase family. As to quaternary structure, monomer. Interacts with DnaB. It depends on Zn(2+) as a cofactor. Mg(2+) serves as cofactor.

It carries out the reaction ssDNA + n NTP = ssDNA/pppN(pN)n-1 hybrid + (n-1) diphosphate.. RNA polymerase that catalyzes the synthesis of short RNA molecules used as primers for DNA polymerase during DNA replication. The polypeptide is DNA primase (Salmonella typhimurium (strain LT2 / SGSC1412 / ATCC 700720)).